The chain runs to 223 residues: ATP-dependent dethiobiotin synthetase BioD (223 aa).

Residue 11 to 16 participates in ATP binding; sequence DIGKTY. Thr15 is a Mg(2+) binding site. The active site involves Lys36. Residue Thr40 coordinates substrate. ATP contacts are provided by residues Asp50, 110–113, and 174–175; these read EGAG and NN. Mg(2+) is bound by residues Asp50 and Glu110.

The protein belongs to the dethiobiotin synthetase family. Homodimer. Requires Mg(2+) as cofactor.

It localises to the cytoplasm. It carries out the reaction (7R,8S)-7,8-diammoniononanoate + CO2 + ATP = (4R,5S)-dethiobiotin + ADP + phosphate + 3 H(+). It functions in the pathway cofactor biosynthesis; biotin biosynthesis; biotin from 7,8-diaminononanoate: step 1/2. Catalyzes a mechanistically unusual reaction, the ATP-dependent insertion of CO2 between the N7 and N8 nitrogen atoms of 7,8-diaminopelargonic acid (DAPA, also called 7,8-diammoniononanoate) to form a ureido ring. The chain is ATP-dependent dethiobiotin synthetase BioD from Staphylococcus epidermidis (strain ATCC 35984 / DSM 28319 / BCRC 17069 / CCUG 31568 / BM 3577 / RP62A).